Reading from the N-terminus, the 160-residue chain is Transcriptional repressor NrdR (160 aa).

Residues 1–11 (MRCPNCNSLDT) are compositionally biased toward polar residues. Residues 1–20 (MRCPNCNSLDTQVKDSRPTE) are disordered. A zinc finger lies at 3-34 (CPNCNSLDTQVKDSRPTEDSSVIRRRRVCIAC). Residues 49–139 (LTVIKRNGRR…VYRNFREAKD (91 aa)) form the ATP-cone domain.

This sequence belongs to the NrdR family. Zn(2+) is required as a cofactor.

Its function is as follows. Negatively regulates transcription of bacterial ribonucleotide reductase nrd genes and operons by binding to NrdR-boxes. This Rhodopseudomonas palustris (strain HaA2) protein is Transcriptional repressor NrdR.